Consider the following 227-residue polypeptide: Urease accessory protein UreF (227 aa).

The protein belongs to the UreF family. As to quaternary structure, ureD, UreF and UreG form a complex that acts as a GTP-hydrolysis-dependent molecular chaperone, activating the urease apoprotein by helping to assemble the nickel containing metallocenter of UreC. The UreE protein probably delivers the nickel.

It is found in the cytoplasm. In terms of biological role, required for maturation of urease via the functional incorporation of the urease nickel metallocenter. The polypeptide is Urease accessory protein UreF (Actinobacillus pleuropneumoniae serotype 5b (strain L20)).